We begin with the raw amino-acid sequence, 212 residues long: Peptide methionine sulfoxide reductase MsrA (212 aa).

The active site involves C52.

The protein belongs to the MsrA Met sulfoxide reductase family.

It carries out the reaction L-methionyl-[protein] + [thioredoxin]-disulfide + H2O = L-methionyl-(S)-S-oxide-[protein] + [thioredoxin]-dithiol. It catalyses the reaction [thioredoxin]-disulfide + L-methionine + H2O = L-methionine (S)-S-oxide + [thioredoxin]-dithiol. In terms of biological role, has an important function as a repair enzyme for proteins that have been inactivated by oxidation. Catalyzes the reversible oxidation-reduction of methionine sulfoxide in proteins to methionine. This chain is Peptide methionine sulfoxide reductase MsrA, found in Salmonella paratyphi A (strain AKU_12601).